The primary structure comprises 75 residues: DNA-directed RNA polymerase subunit epsilon (75 aa).

This sequence belongs to the RNA polymerase subunit epsilon family. RNAP is composed of a core of 2 alpha, a beta and a beta' subunit. The core is associated with a delta subunit, and at least one of epsilon or omega. When a sigma factor is associated with the core the holoenzyme is formed, which can initiate transcription.

It carries out the reaction RNA(n) + a ribonucleoside 5'-triphosphate = RNA(n+1) + diphosphate. A non-essential component of RNA polymerase (RNAP). This chain is DNA-directed RNA polymerase subunit epsilon, found in Lactobacillus johnsonii (strain CNCM I-12250 / La1 / NCC 533).